Consider the following 176-residue polypeptide: Ribosome rescue factor SmrB (176 aa).

Residues 93 to 168 (LDLHGYRQSE…GDAALLVLID (76 aa)) enclose the Smr domain.

Belongs to the SmrB family. In terms of assembly, associates with collided ribosomes, but not with correctly translating polysomes.

Acts as a ribosome collision sensor. Detects stalled/collided disomes (pairs of ribosomes where the leading ribosome is stalled and a second ribosome has collided with it) and endonucleolytically cleaves mRNA at the 5' boundary of the stalled ribosome. Stalled/collided disomes form a new interface (primarily via the 30S subunits) that binds SmrB. Cleaved mRNA becomes available for tmRNA ligation, leading to ribosomal subunit dissociation and rescue of stalled ribosomes. The chain is Ribosome rescue factor SmrB from Shewanella baltica (strain OS195).